Reading from the N-terminus, the 382-residue chain is uncharacterized protein (382 aa).

Transmembrane regions (helical) follow at residues 14–34 (GLLLLTLAIAVLNTLVPLWLA), 45–65 (VVSSSYFTGNLVGTLLTGYVI), 79–99 (FIFAAGCAGLGLMIGFWSWLA), 102–122 (FVAGVGCAMIWVVVESALMCS), 131–151 (LLAAYMMVYYVGTFLGQLLVS), 157–177 (LMSVLPWVTGLTLAGILPLLF), 204–224 (LGVNGCIISGIVLGSLYGLMP), 235–255 (ASIGFWMAVLVSAGILGQWPI), 270–290 (VQVFVVILGSIAMLSQAAMAP), 291–311 (ALFILGAAGFTLYPVAMAWAC), 325–345 (ALLLSYTVGSLLGPSFTAMLM), and 348–368 (FSDNLLFIMIASVSFIYLLML).

This sequence belongs to the major facilitator superfamily. YcaD (TC 2.A.1.26) family.

The protein localises to the cell inner membrane. This is an uncharacterized protein from Escherichia coli O7:K1 (strain IAI39 / ExPEC).